We begin with the raw amino-acid sequence, 250 residues long: Pyridoxine 5'-phosphate synthase (250 aa).

N8 and R19 together coordinate 3-amino-2-oxopropyl phosphate. The Proton acceptor role is filled by H44. 1-deoxy-D-xylulose 5-phosphate contacts are provided by R46 and H51. Catalysis depends on E76, which acts as the Proton acceptor. A 1-deoxy-D-xylulose 5-phosphate-binding site is contributed by T106. Residue H200 is the Proton donor of the active site. 3-amino-2-oxopropyl phosphate is bound by residues D201 and 223-224 (GH).

This sequence belongs to the PNP synthase family. In terms of assembly, homooctamer; tetramer of dimers.

It localises to the cytoplasm. It carries out the reaction 3-amino-2-oxopropyl phosphate + 1-deoxy-D-xylulose 5-phosphate = pyridoxine 5'-phosphate + phosphate + 2 H2O + H(+). It participates in cofactor biosynthesis; pyridoxine 5'-phosphate biosynthesis; pyridoxine 5'-phosphate from D-erythrose 4-phosphate: step 5/5. Catalyzes the complicated ring closure reaction between the two acyclic compounds 1-deoxy-D-xylulose-5-phosphate (DXP) and 3-amino-2-oxopropyl phosphate (1-amino-acetone-3-phosphate or AAP) to form pyridoxine 5'-phosphate (PNP) and inorganic phosphate. The protein is Pyridoxine 5'-phosphate synthase of Allorhizobium ampelinum (strain ATCC BAA-846 / DSM 112012 / S4) (Agrobacterium vitis (strain S4)).